A 282-amino-acid chain; its full sequence is Undecaprenyl-diphosphatase (282 aa).

Transmembrane regions (helical) follow at residues 90 to 110 (YRLGWYVIIGTIPICILGLFF), 121 to 141 (LWVVVTALVVFSGVIALAEYV), 194 to 214 (FGFLLAIPAVFASGLFSLPDA), 228 to 248 (QLLVATLIAFVLGLTAVAWLL), and 256 to 276 (MYWFVGYRVLVGTGMLVLLAT).

The protein belongs to the UppP family.

The protein localises to the cell membrane. It carries out the reaction di-trans,octa-cis-undecaprenyl diphosphate + H2O = di-trans,octa-cis-undecaprenyl phosphate + phosphate + H(+). Catalyzes the dephosphorylation of undecaprenyl diphosphate (UPP). Confers resistance to bacitracin. The chain is Undecaprenyl-diphosphatase from Mycobacterium tuberculosis (strain ATCC 25618 / H37Rv).